Here is a 289-residue protein sequence, read N- to C-terminus: Diacylglycerol pyrophosphate phosphatase 1 (289 aa).

Residues 1 to 21 (MNRVSFIKTPFNIGAKWRLED) are Vacuolar-facing. A helical membrane pass occupies residues 22–42 (VFLLIIMILLNYPVYYQQPFE). Over 43–65 (RQFYINDLTISHPYATTERVNNN) the chain is Cytoplasmic. A helical membrane pass occupies residues 66 to 86 (MLFVYSFVVPSLTILIIGSIL). The Vacuolar portion of the chain corresponds to 87–92 (ADRRHL). The helical transmembrane segment at 93 to 113 (IFILYTSLLGLSLAWFSTSFF) threads the bilayer. Over 114-172 (TNFIKNWIGRLRPDFLDRCQPVEGLPLDTLFTAKDVCTTKNHERLLDGFRTTPSGHSSE) the chain is Cytoplasmic. Residues 118-126 (KNWIGRLRP) form a phosphatase sequence motif I region. The tract at residues 166 to 169 (PSGH) is phosphatase sequence motif II. 2 helical membrane-spanning segments follow: residues 173 to 193 (SFAGLGYLYFWLCGQLLTESP) and 194 to 214 (LMPLWRKMVAFLPLLGAALIA). The Cytoplasmic portion of the chain corresponds to 215 to 222 (LSRTQDYR). Residues 216-227 (SRTQDYRHHFVD) are phosphatase sequence motif III. The helical transmembrane segment at 223-243 (HHFVDVILGSMLGYIMAHFFY) threads the bilayer. The Vacuolar segment spans residues 244 to 289 (RRIFPPIDDPLPFKPLMDDSDVTLEEAVTHQRIPDEELHPLSDEGM). Residue S285 is modified to Phosphoserine.

This sequence belongs to the PA-phosphatase related phosphoesterase family.

It localises to the vacuole membrane. The catalysed reaction is a 1,2-diacyl-sn-glycerol 3-diphosphate + H2O = a 1,2-diacyl-sn-glycero-3-phosphate + phosphate + H(+). It catalyses the reaction a 1,2-diacyl-sn-glycero-3-phosphate + H2O = a 1,2-diacyl-sn-glycerol + phosphate. It carries out the reaction a 1-acyl-sn-glycero-3-phosphate + H2O = a 1-acyl-sn-glycerol + phosphate. Inhibited by sodium fluoride (NaF) and pyrophosphate. Strongly inhibited by manganese ion and, to a lower extent, by magnesium and calcium ions. Also inhibited by Cu(2+) ion. In an indirect manner, it is also inhibited by the zinc ion which is able to form a complex with DGPP and prevent the enzyme from removing the phosphate from the substrate. Not inhibited by N-ethylmaleimide. Its function is as follows. Catalyzes the dephosphorylation of diacylglycerol diphosphate (DGPP) to phosphatidate (PA) and the subsequent dephosphorylation of PA to diacylglycerol (DAG). Together with LPP1, regulates intracellular DGPP and PA levels, which are phospholipid molecules believed to play a signaling role in stress response. Can also use lysophosphatidic acid (LPA) and phosphatidylglycerophosphate as substrates. Substrate preference is DGPP &gt; LPA &gt; PA. Activity is independent of a divalent cation ion and insensitive to inhibition by N-ethylmaleimide. This chain is Diacylglycerol pyrophosphate phosphatase 1 (DPP1), found in Saccharomyces cerevisiae (strain ATCC 204508 / S288c) (Baker's yeast).